A 471-amino-acid polypeptide reads, in one-letter code: 6-phosphofructo-2-kinase/fructose-2,6-bisphosphatase 1 (471 aa).

An N-acetylserine modification is found at serine 2. The interval 2–250 (SREMGELTQT…AYYLMNIHVT (249 aa)) is 6-phosphofructo-2-kinase. Serine 33 bears the Phosphoserine; by PKA mark. 49-57 (GLPARGKTY) contributes to the ATP binding site. Residues arginine 82 and arginine 105 each coordinate beta-D-fructose 6-phosphate. The active site involves aspartate 131. Beta-D-fructose 6-phosphate is bound by residues threonine 133 and arginine 139. A Phosphoserine modification is found at serine 141. The active site involves cysteine 161. ATP is bound at residue 170–175 (NIKQVK). Beta-D-fructose 6-phosphate contacts are provided by lysine 175, arginine 196, and tyrosine 200. The segment at 251–471 (PRSIYLCRHG…EALDTVPAHY (221 aa)) is fructose-2,6-bisphosphatase. Arginine 258 contacts beta-D-fructose 2,6-bisphosphate. Histidine 259 functions as the Tele-phosphohistidine intermediate in the catalytic mechanism. Asparagine 265, glycine 271, and arginine 308 together coordinate beta-D-fructose 2,6-bisphosphate. The active-site Proton donor/acceptor is glutamate 328. Beta-D-fructose 2,6-bisphosphate-binding residues include tyrosine 339, arginine 353, lysine 357, tyrosine 368, glutamine 394, and arginine 398. 350–353 (FALR) contacts ATP. ATP contacts are provided by residues 394–398 (QAVMR) and tyrosine 430.

It in the C-terminal section; belongs to the phosphoglycerate mutase family. Homodimer. In terms of tissue distribution, liver.

The catalysed reaction is beta-D-fructose 2,6-bisphosphate + H2O = beta-D-fructose 6-phosphate + phosphate. It catalyses the reaction beta-D-fructose 6-phosphate + ATP = beta-D-fructose 2,6-bisphosphate + ADP + H(+). With respect to regulation, phosphorylation at Ser-33 inhibits the kinase and activates the bisphosphatase. Its function is as follows. Synthesis and degradation of fructose 2,6-bisphosphate. This Rattus norvegicus (Rat) protein is 6-phosphofructo-2-kinase/fructose-2,6-bisphosphatase 1.